The sequence spans 134 residues: S-protein homolog 31 (134 aa).

The signal sequence occupies residues 1 to 21 (MKILSVFLFVFSIYIFGHVSG). N-linked (GlcNAc...) asparagine glycosylation occurs at Asn87.

Belongs to the plant self-incompatibility (S1) protein family.

It localises to the secreted. This chain is S-protein homolog 31, found in Arabidopsis thaliana (Mouse-ear cress).